Here is a 388-residue protein sequence, read N- to C-terminus: Ferrochelatase (388 aa).

Residues H196 and E277 each contribute to the Fe cation site.

This sequence belongs to the ferrochelatase family.

The protein resides in the cytoplasm. It carries out the reaction heme b + 2 H(+) = protoporphyrin IX + Fe(2+). Its pathway is porphyrin-containing compound metabolism; protoheme biosynthesis; protoheme from protoporphyrin-IX: step 1/1. Functionally, catalyzes the ferrous insertion into protoporphyrin IX. This Trichormus variabilis (strain ATCC 29413 / PCC 7937) (Anabaena variabilis) protein is Ferrochelatase.